The following is a 149-amino-acid chain: Large ribosomal subunit protein bL9 (149 aa).

This sequence belongs to the bacterial ribosomal protein bL9 family.

In terms of biological role, binds to the 23S rRNA. In Salinibacter ruber (strain DSM 13855 / M31), this protein is Large ribosomal subunit protein bL9.